A 321-amino-acid polypeptide reads, in one-letter code: Ribose-phosphate pyrophosphokinase (321 aa).

ATP contacts are provided by residues 44–46 (DGE) and 103–104 (RQ). Residues H137 and D179 each contribute to the Mg(2+) site. The active site involves K202. Residues R204, D228, and 232 to 236 (DTAGT) each bind D-ribose 5-phosphate.

The protein belongs to the ribose-phosphate pyrophosphokinase family. Class I subfamily. In terms of assembly, homohexamer. The cofactor is Mg(2+).

Its subcellular location is the cytoplasm. It carries out the reaction D-ribose 5-phosphate + ATP = 5-phospho-alpha-D-ribose 1-diphosphate + AMP + H(+). It participates in metabolic intermediate biosynthesis; 5-phospho-alpha-D-ribose 1-diphosphate biosynthesis; 5-phospho-alpha-D-ribose 1-diphosphate from D-ribose 5-phosphate (route I): step 1/1. Involved in the biosynthesis of the central metabolite phospho-alpha-D-ribosyl-1-pyrophosphate (PRPP) via the transfer of pyrophosphoryl group from ATP to 1-hydroxyl of ribose-5-phosphate (Rib-5-P). This is Ribose-phosphate pyrophosphokinase from Staphylococcus epidermidis (strain ATCC 35984 / DSM 28319 / BCRC 17069 / CCUG 31568 / BM 3577 / RP62A).